Reading from the N-terminus, the 404-residue chain is p-hydroxybenzoate hydroxylase (404 aa).

FAD-binding positions include Glu35, 45–50 (RIRAGI), and Gln105. Substrate contacts are provided by residues Tyr203, 214-216 (SMR), and Tyr224. Residue Asp288 coordinates FAD. Pro295 provides a ligand contact to substrate. 301–302 (LN) serves as a coordination point for FAD.

Belongs to the aromatic-ring hydroxylase family. In terms of assembly, homodimer. FAD serves as cofactor.

It carries out the reaction 4-hydroxybenzoate + NADPH + O2 + H(+) = 3,4-dihydroxybenzoate + NADP(+) + H2O. The protein operates within aromatic compound metabolism; benzoate degradation via hydroxylation; 3,4-dihydroxybenzoate from benzoate: step 2/2. In terms of biological role, catalyzes the incorporation of an atom of dioxygen into p-hydroxybenzoate (p-OHB) to form 3,4-dihydroxybenzoate (3,4DOHB). The reaction occurs in two parts: reduction of the flavin adenine dinucleotide (FAD) in the enzyme by reduced nicotinamide adenine dinucleotide phosphate (NADPH) in response to binding p-hydroxybenzoate to the enzyme and oxidation of reduced FAD with oxygen to form a hydroperoxide, which then oxygenates p-hydroxybenzoate. The chain is p-hydroxybenzoate hydroxylase (pobA) from Acinetobacter baylyi (strain ATCC 33305 / BD413 / ADP1).